The following is a 432-amino-acid chain: Enolase (432 aa).

Gln163 provides a ligand contact to (2R)-2-phosphoglycerate. Residue Glu205 is the Proton donor of the active site. Asp242, Glu285, and Asp312 together coordinate Mg(2+). Positions 337, 366, 367, and 388 each coordinate (2R)-2-phosphoglycerate. Lys337 (proton acceptor) is an active-site residue.

It belongs to the enolase family. Mg(2+) is required as a cofactor.

It localises to the cytoplasm. The protein resides in the secreted. The protein localises to the cell surface. It catalyses the reaction (2R)-2-phosphoglycerate = phosphoenolpyruvate + H2O. It participates in carbohydrate degradation; glycolysis; pyruvate from D-glyceraldehyde 3-phosphate: step 4/5. Its function is as follows. Catalyzes the reversible conversion of 2-phosphoglycerate (2-PG) into phosphoenolpyruvate (PEP). It is essential for the degradation of carbohydrates via glycolysis. The polypeptide is Enolase (Desulfovibrio desulfuricans (strain ATCC 27774 / DSM 6949 / MB)).